Reading from the N-terminus, the 268-residue chain is Undecaprenyl-diphosphatase (268 aa).

A run of 7 helical transmembrane segments spans residues 47–67 (FAVLIQLGAILAILSIYFAKL), 83–103 (FVIGVLVAFLPAAMIGAVAGS), 109–129 (LFNPWVVCFSLIVGGAILLWV), 144–164 (FPLPMYFYIGCAQCLAMIPGV), 184–204 (AAEFSFFLAIPTMVGAFVYDF), 218–238 (IVAIGFVVSFITAVIVVKTFL), and 246–266 (FELFAWWRVIVGTLGLIALAM).

This sequence belongs to the UppP family.

The protein localises to the cell inner membrane. The catalysed reaction is di-trans,octa-cis-undecaprenyl diphosphate + H2O = di-trans,octa-cis-undecaprenyl phosphate + phosphate + H(+). In terms of biological role, catalyzes the dephosphorylation of undecaprenyl diphosphate (UPP). Confers resistance to bacitracin. The protein is Undecaprenyl-diphosphatase of Rhodopseudomonas palustris (strain BisB5).